Here is a 95-residue protein sequence, read N- to C-terminus: MLKPLGDRVVVRFEEEKEQTVGGFVLAGNHKESTRKATVVAVSETGMRTITGEVVPPSVTVGQMVLVEDGQVLEVTHEDEKLAIIREADIIAILG.

This sequence belongs to the GroES chaperonin family. In terms of assembly, heptamer of 7 subunits arranged in a ring. Interacts with the chaperonin GroEL.

The protein localises to the cytoplasm. Its function is as follows. Together with the chaperonin GroEL, plays an essential role in assisting protein folding. The GroEL-GroES system forms a nano-cage that allows encapsulation of the non-native substrate proteins and provides a physical environment optimized to promote and accelerate protein folding. GroES binds to the apical surface of the GroEL ring, thereby capping the opening of the GroEL channel. In Streptococcus uberis (strain ATCC BAA-854 / 0140J), this protein is Co-chaperonin GroES.